A 382-amino-acid polypeptide reads, in one-letter code: Protein phosphatase 1A (382 aa).

Residue glycine 2 is the site of N-myristoyl glycine attachment. The 269-residue stretch at 23 to 291 (RYGLSSMQGW…DNMSVILICF (269 aa)) folds into the PPM-type phosphatase domain. The Mn(2+) site is built by aspartate 60, glycine 61, aspartate 239, and aspartate 282. Residues serine 375 and serine 377 each carry the phosphoserine modification.

It belongs to the PP2C family. Monomer. Interacts with SMAD2; the interaction dephosphorylates SMAD2 in its C-terminal SXS motif resulting in disruption of the SMAD2/SMAD4 complex, SMAD2 nuclear export and termination of the TGF-beta-mediated signaling. Interacts with SMAD2; the interaction dephosphorylates SMAD2 in its C-terminal SXS motif resulting in disruption of the SMAD2/SMAD4 complex, SMAD2 nuclear export and termination of the TGF-beta-mediated signaling. Interacts with the phosphorylated form of IKBKB/IKKB. Mg(2+) is required as a cofactor. Mn(2+) serves as cofactor. N-myristoylation is essential for the recognition of its substrates for dephosphorylation.

The protein resides in the nucleus. Its subcellular location is the cytoplasm. The protein localises to the cytosol. It localises to the membrane. The enzyme catalyses O-phospho-L-seryl-[protein] + H2O = L-seryl-[protein] + phosphate. It carries out the reaction O-phospho-L-threonyl-[protein] + H2O = L-threonyl-[protein] + phosphate. Its function is as follows. Enzyme with a broad specificity. Negatively regulates TGF-beta signaling through dephosphorylating SMAD2 and SMAD3, resulting in their dissociation from SMAD4, nuclear export of the SMADs and termination of the TGF-beta-mediated signaling. Dephosphorylates PRKAA1 and PRKAA2. Plays an important role in the termination of TNF-alpha-mediated NF-kappa-B activation through dephosphorylating and inactivating IKBKB/IKKB. In Bos taurus (Bovine), this protein is Protein phosphatase 1A (PPM1A).